Here is a 238-residue protein sequence, read N- to C-terminus: Ribonuclease PH (238 aa).

Phosphate contacts are provided by residues Arg86 and 124–126 (GTR).

It belongs to the RNase PH family. As to quaternary structure, homohexameric ring arranged as a trimer of dimers.

It carries out the reaction tRNA(n+1) + phosphate = tRNA(n) + a ribonucleoside 5'-diphosphate. Its function is as follows. Phosphorolytic 3'-5' exoribonuclease that plays an important role in tRNA 3'-end maturation. Removes nucleotide residues following the 3'-CCA terminus of tRNAs; can also add nucleotides to the ends of RNA molecules by using nucleoside diphosphates as substrates, but this may not be physiologically important. Probably plays a role in initiation of 16S rRNA degradation (leading to ribosome degradation) during starvation. In Halorhodospira halophila (strain DSM 244 / SL1) (Ectothiorhodospira halophila (strain DSM 244 / SL1)), this protein is Ribonuclease PH.